The following is a 148-amino-acid chain: uncharacterized protein (148 aa).

The chain crosses the membrane as a helical span at residues 22–40 (YFLSLTVVISIIHLFTTCV). The segment at 43–141 (HNHSTHFPYL…YYPISRHYLH (99 aa)) is histidine-rich.

The protein localises to the host membrane. This is an uncharacterized protein from African swine fever virus (strain Badajoz 1971 Vero-adapted) (Ba71V).